Here is a 291-residue protein sequence, read N- to C-terminus: N-acetylmannosamine kinase (291 aa).

Residues 5–12 (AIDIGGTK) and 132–139 (GVGGGVVS) each bind ATP. Zn(2+)-binding residues include His156, Cys166, Cys168, and Cys173.

Belongs to the ROK (NagC/XylR) family. NanK subfamily. In terms of assembly, homodimer.

The catalysed reaction is an N-acyl-D-mannosamine + ATP = an N-acyl-D-mannosamine 6-phosphate + ADP + H(+). It participates in amino-sugar metabolism; N-acetylneuraminate degradation; D-fructose 6-phosphate from N-acetylneuraminate: step 2/5. Catalyzes the phosphorylation of N-acetylmannosamine (ManNAc) to ManNAc-6-P. The chain is N-acetylmannosamine kinase (nanK1) from Escherichia coli O6:H1 (strain CFT073 / ATCC 700928 / UPEC).